A 479-amino-acid chain; its full sequence is Nucleoside-diphosphatase uda-1 (479 aa).

The Cytoplasmic segment spans residues 1–7 (MLFPAFS). Residues 8–24 (ILLISFFSLLSVVTTKT) form a helical; Signal-anchor for type II membrane protein membrane-spanning segment. The Lumenal portion of the chain corresponds to 25 to 479 (QYWCHGDGVL…VLSYFNIISV (455 aa)). Glu-171 serves as the catalytic Proton acceptor. Residues Asn-300 and Asn-452 are each glycosylated (N-linked (GlcNAc...) asparagine).

Belongs to the GDA1/CD39 NTPase family. It depends on Ca(2+) as a cofactor. Mg(2+) is required as a cofactor. The cofactor is Mn(2+).

It is found in the endomembrane system. It catalyses the reaction a ribonucleoside 5'-diphosphate + H2O = a ribonucleoside 5'-phosphate + phosphate + H(+). In terms of biological role, hydrolyzes UDP and GDP but not any other nucleoside di-, mono- or triphosphates. May promote reglycosylation reactions involved in glycoproteins folding and quality control in the endoplasmic reticulum. The chain is Nucleoside-diphosphatase uda-1 (uda-1) from Caenorhabditis elegans.